We begin with the raw amino-acid sequence, 910 residues long: Aconitate hydratase A (910 aa).

3 residues coordinate [4Fe-4S] cluster: C454, C520, and C523.

It belongs to the aconitase/IPM isomerase family. As to quaternary structure, monomer. [4Fe-4S] cluster serves as cofactor.

The catalysed reaction is citrate = D-threo-isocitrate. It catalyses the reaction (2S,3R)-3-hydroxybutane-1,2,3-tricarboxylate = 2-methyl-cis-aconitate + H2O. Its pathway is carbohydrate metabolism; tricarboxylic acid cycle; isocitrate from oxaloacetate: step 2/2. The protein operates within organic acid metabolism; propanoate degradation. Its function is as follows. Involved in the catabolism of short chain fatty acids (SCFA) via the tricarboxylic acid (TCA)(acetyl degradation route) and probably the 2-methylcitrate cycle I (propionate degradation route). Catalyzes the reversible isomerization of citrate to isocitrate via cis-aconitate. Could catalyze the hydration of 2-methyl-cis-aconitate to yield (2R,3S)-2-methylisocitrate. The apo form of AcnA functions as a RNA-binding regulatory protein. This chain is Aconitate hydratase A (acnA), found in Pseudomonas aeruginosa (strain ATCC 15692 / DSM 22644 / CIP 104116 / JCM 14847 / LMG 12228 / 1C / PRS 101 / PAO1).